A 447-amino-acid polypeptide reads, in one-letter code: N-succinylarginine dihydrolase (447 aa).

Substrate-binding positions include 19-28 (GGLAVGNIAS), Asn-110, and 137-138 (HR). Residue Glu-174 is part of the active site. Arg-213 contacts substrate. The active site involves His-249. 2 residues coordinate substrate: Asp-251 and Asn-362. Cys-368 serves as the catalytic Nucleophile.

This sequence belongs to the succinylarginine dihydrolase family. Homodimer.

It catalyses the reaction N(2)-succinyl-L-arginine + 2 H2O + 2 H(+) = N(2)-succinyl-L-ornithine + 2 NH4(+) + CO2. It functions in the pathway amino-acid degradation; L-arginine degradation via AST pathway; L-glutamate and succinate from L-arginine: step 2/5. Its function is as follows. Catalyzes the hydrolysis of N(2)-succinylarginine into N(2)-succinylornithine, ammonia and CO(2). The sequence is that of N-succinylarginine dihydrolase from Nitrosospira multiformis (strain ATCC 25196 / NCIMB 11849 / C 71).